Reading from the N-terminus, the 261-residue chain is tRNA pseudouridine synthase A (261 aa).

D52 serves as the catalytic Nucleophile. Y110 lines the substrate pocket.

The protein belongs to the tRNA pseudouridine synthase TruA family. As to quaternary structure, homodimer.

The catalysed reaction is uridine(38/39/40) in tRNA = pseudouridine(38/39/40) in tRNA. Functionally, formation of pseudouridine at positions 38, 39 and 40 in the anticodon stem and loop of transfer RNAs. This Blochmanniella pennsylvanica (strain BPEN) protein is tRNA pseudouridine synthase A.